A 148-amino-acid chain; its full sequence is Nucleoside diphosphate kinase (148 aa).

ATP contacts are provided by K9, F57, R85, T91, R102, and N112. The active-site Pros-phosphohistidine intermediate is the H115.

Belongs to the NDK family. In terms of assembly, homotetramer. It depends on Mg(2+) as a cofactor.

The protein resides in the cytoplasm. It catalyses the reaction a 2'-deoxyribonucleoside 5'-diphosphate + ATP = a 2'-deoxyribonucleoside 5'-triphosphate + ADP. It carries out the reaction a ribonucleoside 5'-diphosphate + ATP = a ribonucleoside 5'-triphosphate + ADP. In terms of biological role, major role in the synthesis of nucleoside triphosphates other than ATP. The ATP gamma phosphate is transferred to the NDP beta phosphate via a ping-pong mechanism, using a phosphorylated active-site intermediate. This Macrococcus caseolyticus (strain JCSC5402) (Macrococcoides caseolyticum) protein is Nucleoside diphosphate kinase.